The sequence spans 125 residues: Inner membrane protein YbjM (125 aa).

Residues Met1–Arg6 lie on the Cytoplasmic side of the membrane. A helical membrane pass occupies residues Trp7 to His27. Residues Met28–Ala34 are Periplasmic-facing. The helical transmembrane segment at Ala35–Phe55 threads the bilayer. At Ser56–Pro64 the chain is on the cytoplasmic side. Residues Leu65–Pro85 traverse the membrane as a helical segment. At Thr86–Glu92 the chain is on the periplasmic side. The helical transmembrane segment at Leu93–Ile113 threads the bilayer. Residues Ser114 to Gln125 lie on the Cytoplasmic side of the membrane.

Its subcellular location is the cell inner membrane. This Escherichia coli O157:H7 protein is Inner membrane protein YbjM (ybjM).